We begin with the raw amino-acid sequence, 997 residues long: Glutamate [NMDA] receptor subunit 1 (997 aa).

The signal sequence occupies residues 1–26 (MAMAEFVFCRPLFGLAIVLLVAPIDA). Topologically, residues 27-573 (AQRHTASDNP…TLVSFLQPFS (547 aa)) are extracellular. N-linked (GlcNAc...) asparagine glycans are attached at residues Asn-258, Asn-314, Asn-345, Asn-397, Asn-454, Asn-481, and Asn-501. Residues 530–532 (PLT) and Arg-537 each bind glycine. Residues 574-594 (NTLWILVMVSVHVVALVLYLL) traverse the membrane as a helical segment. Residues 595–651 (DRFSPFGRFKLSHSDSNEEKALNLSSAVWFAWGVLLNSGIGEGTPRSFSARVLGMVW) are Cytoplasmic-facing. Residues 652–672 (AGFAMIIVASYTANLAAFLVL) traverse the membrane as a helical segment. Residues 673–831 (ERPKTKLSGI…KTPNTLGLKN (159 aa)) lie on the Extracellular side of the membrane. Asn-693 carries an N-linked (GlcNAc...) asparagine glycan. Positions 703 and 747 each coordinate glycine. A helical transmembrane segment spans residues 832 to 852 (MAGVFILVGVGIAGGVGLIII). Residues 853 to 997 (EVIYKKHQVK…YTSDVSHLVV (145 aa)) are Cytoplasmic-facing. The interval 970–997 (LGKTRPQQSVLPPRYSPGYTSDVSHLVV) is disordered. The span at 987-997 (GYTSDVSHLVV) shows a compositional bias: polar residues.

It belongs to the glutamate-gated ion channel (TC 1.A.10.1) family. Forms a heteromeric NMDA channel with Nmdar2. Highly expressed in adult heads: in the brain and ring gland. Low expression throughout the entire brain is also seen. Higher expression levels were observed in some scattered cell bodies and part of their fibers, including those from several pairs of DPM (dorsal-posterior-medial) neurons surrounding the calyx, DAL (dorsal-anterior-lateral) and DPL (dorsal-posterior-lateral) neurons in the lateral protocerebrum (LP), VAL (ventral-anterior-lateral) neurons in the anterior protocerebrum, and two pairs of VP (ventral-posterior) neurons in the posterior protocerebrum. Many cell bodies in the optic lobes show preferential expression. Punctuate expression is notably detected in many brain regions including the superior medial protocerebrum. Weakly expressed in the antennal lobes and central complex.

Its subcellular location is the cell membrane. It is found in the postsynaptic cell membrane. The protein localises to the postsynaptic density. Its function is as follows. NMDA receptor subtype of glutamate-gated ion channels with high calcium permeability and voltage-dependent sensitivity to magnesium. Mediated by glycine. This protein plays a key role in synaptic plasticity, synaptogenesis, excitotoxicity, memory acquisition and learning. It mediates neuronal functions in glutamate neurotransmission. Is involved in the cell surface targeting of NMDA receptors. Plays a role in associative learning and in long-term memory consolidation. This is Glutamate [NMDA] receptor subunit 1 from Drosophila melanogaster (Fruit fly).